A 312-amino-acid polypeptide reads, in one-letter code: 4-hydroxyproline 2-epimerase (312 aa).

C88 (proton acceptor) is an active-site residue. Residues 89 to 90 (GH), H208, and D234 contribute to the substrate site. C238 serves as the catalytic Proton donor. 239 to 240 (GT) serves as a coordination point for substrate.

This sequence belongs to the proline racemase family.

It catalyses the reaction trans-4-hydroxy-L-proline = cis-4-hydroxy-D-proline. In terms of biological role, catalyzes the epimerization of trans-4-hydroxy-L-proline (t4LHyp) to cis-4-hydroxy-D-proline (c4DHyp). Is likely involved in a degradation pathway that converts t4LHyp to alpha-ketoglutarate. Can also catalyze the epimerization of trans-3-hydroxy-L-proline (t3LHyp) to cis-3-hydroxy-D-proline (c3DHyp), albeit with 500-fold lower efficiency. Displays no proline racemase activity. In Xanthomonas campestris pv. campestris (strain ATCC 33913 / DSM 3586 / NCPPB 528 / LMG 568 / P 25), this protein is 4-hydroxyproline 2-epimerase.